A 480-amino-acid chain; its full sequence is UDP-N-acetylmuramate--L-alanine ligase (480 aa).

Residue 115 to 121 participates in ATP binding; sequence GTHGKTT.

Belongs to the MurCDEF family.

It localises to the cytoplasm. The enzyme catalyses UDP-N-acetyl-alpha-D-muramate + L-alanine + ATP = UDP-N-acetyl-alpha-D-muramoyl-L-alanine + ADP + phosphate + H(+). It participates in cell wall biogenesis; peptidoglycan biosynthesis. Its function is as follows. Cell wall formation. The chain is UDP-N-acetylmuramate--L-alanine ligase from Gluconacetobacter diazotrophicus (strain ATCC 49037 / DSM 5601 / CCUG 37298 / CIP 103539 / LMG 7603 / PAl5).